The primary structure comprises 362 residues: Alkanal monooxygenase alpha chain (362 aa).

Belongs to the bacterial luciferase oxidoreductase family. In terms of assembly, heterodimer of an alpha and a beta chain.

It catalyses the reaction a long-chain fatty aldehyde + FMNH2 + O2 = a long-chain fatty acid + hnu + FMN + H2O + 2 H(+). Its function is as follows. Light-emitting reaction in luminous bacteria. This is Alkanal monooxygenase alpha chain (luxA) from Photorhabdus luminescens (Xenorhabdus luminescens).